We begin with the raw amino-acid sequence, 121 residues long: Large ribosomal subunit protein bL12 (121 aa).

Belongs to the bacterial ribosomal protein bL12 family. In terms of assembly, homodimer. Part of the ribosomal stalk of the 50S ribosomal subunit. Forms a multimeric L10(L12)X complex, where L10 forms an elongated spine to which 2 to 4 L12 dimers bind in a sequential fashion. Binds GTP-bound translation factors.

Functionally, forms part of the ribosomal stalk which helps the ribosome interact with GTP-bound translation factors. Is thus essential for accurate translation. In Leuconostoc mesenteroides subsp. mesenteroides (strain ATCC 8293 / DSM 20343 / BCRC 11652 / CCM 1803 / JCM 6124 / NCDO 523 / NBRC 100496 / NCIMB 8023 / NCTC 12954 / NRRL B-1118 / 37Y), this protein is Large ribosomal subunit protein bL12.